Here is a 79-residue protein sequence, read N- to C-terminus: Hematopoietic cell signal transducer (79 aa).

The first 18 residues, 1 to 18 (MVPPGNILFLLLLPVATA), serve as a signal peptide directing secretion. At 19–35 (QMTPGSCSGCGPLSLPL) the chain is on the extracellular side. A helical transmembrane segment spans residues 36–56 (LAGLVAADAVVSLLIVVVVFV). The Cytoplasmic segment spans residues 57-79 (CARLRSRPTQEDDKIYINMPGRG). Tyr-72 is modified (phosphotyrosine). The tract at residues 72-74 (YIN) is GRB2 binding site. The interval 72-75 (YINM) is PIK3R1 binding site.

This sequence belongs to the DAP10 family. Homodimer; Disulfide-linked. Heterohexamer composed of four subunits of HCST/DAP10 and two subunits of KLRK1. Interacts (via transmembrane domain) with KLRK1 (via transmembrane domain); the interaction is required for KLRK1 NK cell surface and induces NK cell-mediated cytotoxicity. Interacts with PIK3R1 and GRB2. Interacts with CLEC5A. Forms an CLEC5A/TYROBP/HCST trimolecular complex depending almost solely on TYROBP. Interacts with KLRK1. Interacts with CD300H. Post-translationally, phosphorylated; PIK3R1 and GRB2 associate specifically with tyrosine-phosphorylated HCST. O-glycosylated.

It is found in the membrane. In terms of biological role, transmembrane adapter protein which associates with KLRK1 to form an activation receptor KLRK1-HCST in lymphoid and myeloid cells; this receptor plays a major role in triggering cytotoxicity against target cells expressing cell surface ligands such as MHC class I chain-related MICA and MICB, and UL16-binding proteins (ULBPs); these ligands are up-regulated by stress conditions and pathological state such as viral infection and tumor transformation. Functions as a docking site for PI3-kinase PIK3R1 and GRB2. Interaction of ULBPs with KLRK1-HCST triggers calcium mobilization and activation of the PIK3R1, MAP2K/ERK, and JAK2/STAT5 signaling pathways. Both PIK3R1 and GRB2 are required for full KLRK1-HCST-mediated activation and ultimate killing of target cells. In NK cells, KLRK1-HCST signaling directly induces cytotoxicity and enhances cytokine production initiated via DAP12/TYROBP-associated receptors. In T-cells, it provides primarily costimulation for TCR-induced signals. KLRK1-HCST receptor plays a role in immune surveillance against tumors and is required for cytolysis of tumors cells; indeed, melanoma cells that do not express KLRK1 ligands escape from immune surveillance mediated by NK cells. The polypeptide is Hematopoietic cell signal transducer (HCST) (Bos taurus (Bovine)).